A 502-amino-acid polypeptide reads, in one-letter code: Protein krueppel (502 aa).

Disordered regions lie at residues 115–164 (PPQG…KLSV) and 178–202 (DMYHTSGGPISPPSSGSSPNSTHDG). Low complexity-rich tracts occupy residues 119-136 (THLHSPPASPHSPLSTPL) and 183-198 (SGGPISPPSSGSSPNS). 5 consecutive C2H2-type zinc fingers follow at residues 222–244 (FTCKICSRSFGYKHVLQNHERTH), 250–272 (FECPECHKRFTRDHHLKTHMRLH), 278–300 (YHCSHCDRQFVQVANLRRHLRVH), 306–328 (YTCEICDGKFSDSNQLKSHMLVH), and 334–354 (FECERCHMKFRRRHHLMNHKC). 2 disordered regions span residues 399–427 (NESVDMEKATPEDDGPLDLSEDGASSVDG) and 445–502 (RLPP…HQQH). The span at 410–419 (EDDGPLDLSE) shows a compositional bias: acidic residues. Phosphoserine is present on residues serine 468, serine 471, and serine 477. Over residues 482–491 (DDIDLYDLDD) the composition is skewed to acidic residues.

This sequence belongs to the krueppel C2H2-type zinc-finger protein family.

The protein resides in the nucleus. Its function is as follows. Krueppel is a gap class segmentation protein. It is involved in the segmentation of the embryo and in the differentiation of the Malpighian tubules. The protein is Protein krueppel (Kr) of Drosophila melanogaster (Fruit fly).